Consider the following 291-residue polypeptide: Phosphatidylglycerol--prolipoprotein diacylglyceryl transferase (291 aa).

A run of 7 helical transmembrane segments spans residues 21–41 (VALH…MWLA), 60–80 (LLYA…VLFY), 96–116 (WDGG…MIIF), 130–150 (FIAP…FING), 198–218 (SQLY…NLFI), 225–245 (GAVS…VEFF), and 260–280 (ISMG…MMVW). A 1,2-diacyl-sn-glycero-3-phospho-(1'-sn-glycerol) is bound at residue R143.

The protein belongs to the Lgt family.

It localises to the cell inner membrane. It carries out the reaction L-cysteinyl-[prolipoprotein] + a 1,2-diacyl-sn-glycero-3-phospho-(1'-sn-glycerol) = an S-1,2-diacyl-sn-glyceryl-L-cysteinyl-[prolipoprotein] + sn-glycerol 1-phosphate + H(+). Its pathway is protein modification; lipoprotein biosynthesis (diacylglyceryl transfer). Functionally, catalyzes the transfer of the diacylglyceryl group from phosphatidylglycerol to the sulfhydryl group of the N-terminal cysteine of a prolipoprotein, the first step in the formation of mature lipoproteins. The protein is Phosphatidylglycerol--prolipoprotein diacylglyceryl transferase of Salmonella choleraesuis (strain SC-B67).